A 142-amino-acid chain; its full sequence is Large ribosomal subunit protein uL11 (142 aa).

This sequence belongs to the universal ribosomal protein uL11 family. In terms of assembly, part of the ribosomal stalk of the 50S ribosomal subunit. Interacts with L10 and the large rRNA to form the base of the stalk. L10 forms an elongated spine to which L12 dimers bind in a sequential fashion forming a multimeric L10(L12)X complex. One or more lysine residues are methylated.

In terms of biological role, forms part of the ribosomal stalk which helps the ribosome interact with GTP-bound translation factors. This Sinorhizobium medicae (strain WSM419) (Ensifer medicae) protein is Large ribosomal subunit protein uL11.